The sequence spans 56 residues: Large ribosomal subunit protein bL32 (56 aa).

The tract at residues 1–37 (MAVQQNKPTRSKRGMRRSHDALTAPLLSVDKTSGETH) is disordered.

The protein belongs to the bacterial ribosomal protein bL32 family.

This is Large ribosomal subunit protein bL32 from Photorhabdus laumondii subsp. laumondii (strain DSM 15139 / CIP 105565 / TT01) (Photorhabdus luminescens subsp. laumondii).